A 233-amino-acid polypeptide reads, in one-letter code: uncharacterized protein (233 aa).

The disordered stretch occupies residues 21-43 (RWRTATSADHPRRGRPAAQAVRR).

This is an uncharacterized protein from Mycobacterium tuberculosis (strain CDC 1551 / Oshkosh).